A 418-amino-acid chain; its full sequence is Gamma-glutamyl phosphate reductase (418 aa).

This sequence belongs to the gamma-glutamyl phosphate reductase family.

The protein localises to the cytoplasm. It catalyses the reaction L-glutamate 5-semialdehyde + phosphate + NADP(+) = L-glutamyl 5-phosphate + NADPH + H(+). The protein operates within amino-acid biosynthesis; L-proline biosynthesis; L-glutamate 5-semialdehyde from L-glutamate: step 2/2. Functionally, catalyzes the NADPH-dependent reduction of L-glutamate 5-phosphate into L-glutamate 5-semialdehyde and phosphate. The product spontaneously undergoes cyclization to form 1-pyrroline-5-carboxylate. The polypeptide is Gamma-glutamyl phosphate reductase (Lacticaseibacillus casei (strain BL23) (Lactobacillus casei)).